The chain runs to 306 residues: Beta-lactamase (306 aa).

A signal peptide spans 1–36; sequence MKLKTKASIKFGICVGLLCLSITGFTPFFNSTHAEA. Catalysis depends on Ser89, which acts as the Acyl-ester intermediate. Residue 251-253 participates in substrate binding; it reads KSG.

This sequence belongs to the class-A beta-lactamase family.

The protein localises to the secreted. It carries out the reaction a beta-lactam + H2O = a substituted beta-amino acid. Its function is as follows. This protein is a beta-lactamase with a substrate specificity for penicillins. The polypeptide is Beta-lactamase (penP) (Bacillus subtilis (strain 168)).